The following is a 189-amino-acid chain: HGPRTase-like protein (189 aa).

Belongs to the purine/pyrimidine phosphoribosyltransferase family. Archaeal HPRT subfamily.

May catalyze a purine salvage reaction, the substrate is unknown. This Halorubrum lacusprofundi (strain ATCC 49239 / DSM 5036 / JCM 8891 / ACAM 34) protein is HGPRTase-like protein.